The chain runs to 316 residues: Probable protein-L-isoaspartate O-methyltransferase (316 aa).

S-adenosyl-L-homocysteine-binding positions include 103-106, histidine 111, serine 136, 157-158, 187-188, threonine 263, and glutamine 268; these read ATIS, EH, and DG. Residue serine 106 is part of the active site.

This sequence belongs to the methyltransferase superfamily. L-isoaspartyl/D-aspartyl protein methyltransferase family.

The protein localises to the cytoplasm. It is found in the cytosol. The catalysed reaction is [protein]-L-isoaspartate + S-adenosyl-L-methionine = [protein]-L-isoaspartate alpha-methyl ester + S-adenosyl-L-homocysteine. Its function is as follows. Initiates the repair of damaged proteins by catalyzing methyl esterification of L-isoaspartyl and D-aspartyl residues produced by spontaneous isomerization and racemization of L-aspartyl and L-asparaginyl residues in aging peptides and proteins. This is Probable protein-L-isoaspartate O-methyltransferase (pcmA) from Dictyostelium discoideum (Social amoeba).